Consider the following 229-residue polypeptide: Uracil-DNA glycosylase (229 aa).

Asp64 functions as the Proton acceptor in the catalytic mechanism.

This sequence belongs to the uracil-DNA glycosylase (UDG) superfamily. UNG family.

It localises to the cytoplasm. The catalysed reaction is Hydrolyzes single-stranded DNA or mismatched double-stranded DNA and polynucleotides, releasing free uracil.. In terms of biological role, excises uracil residues from the DNA which can arise as a result of misincorporation of dUMP residues by DNA polymerase or due to deamination of cytosine. This chain is Uracil-DNA glycosylase, found in Salmonella agona (strain SL483).